Reading from the N-terminus, the 437-residue chain is Transcription factor ets-4 (437 aa).

Residues 1–30 are disordered; sequence MNGTGSVGHRWNSLSPEPHSGTESTASTPF. Residues 21 to 30 are compositionally biased toward polar residues; sequence GTESTASTPF. Lys32 is covalently cross-linked (Glycyl lysine isopeptide (Lys-Gly) (interchain with G-Cter in SUMO)). Phosphoserine is present on Ser73. Lys83 participates in a covalent cross-link: Glycyl lysine isopeptide (Lys-Gly) (interchain with G-Cter in SUMO). In terms of domain architecture, PNT spans 120–202; sequence HLIQDISTTC…AQLQVWKTGT (83 aa). A disordered region spans residues 275–302; it reads QGTVLPSPSNSDTSSNGSSQDMNDDDID. Residues 280–293 are compositionally biased toward low complexity; it reads PSPSNSDTSSNGSS. The segment at residues 349–432 is a DNA-binding region (ETS); that stretch reads VHLWQFIREL…KKQRLVYKFL (84 aa).

Belongs to the ETS family. In terms of assembly, may interact with cebp-1. May interact with tdpt-1 to facilitate its sumoylation. Phosphorylation is required for axon regeneration. In terms of processing, sumoylated; sumoylation inhibits phosphorylation, which is required for probable interaction with cebp-1 and consequently the expression of svh-2. In terms of tissue distribution, expressed in cells of the anterior and posterior bulbs of the pharynx, seam cells, a few unidentified cells of the vulva, the hypodermis, several unidentified neurons, labial socket cells of the head and rectal cells.

It is found in the nucleus. Its function is as follows. Transcription factor which binds to 5'-GGAA/T-3' DNA consensus sequences. Both positively and negatively regulates the expression of target genes. Plays a role in the regulation of adult lifespan, which may in part be through modulation of daf-16 activity. Regulates the expression of genes such as svh-2 in response to axon injury and in addition, may function downstream of the cAMP signaling pathway to promote axon regeneration. Regulates the expression of lipid metabolism genes and may also control the expression of the RNA-binding protein rege-1 which too has been implicated in the control of fat accumulation. This Caenorhabditis elegans protein is Transcription factor ets-4.